We begin with the raw amino-acid sequence, 710 residues long: PC3-like endoprotease variant B (710 aa).

An N-terminal signal peptide occupies residues 1–29 (MNYRGIYRRRYVFVLLLLVAVVNISYGWT). Residues N23, N62, and N190 are each glycosylated (N-linked (GlcNAc...) asparagine). Positions 30–152 (VLKNKDYKRR…QQKILERVKR (123 aa)) are excised as a propeptide. One can recognise a Peptidase S8 domain in the interval 164–486 (MWYLLNTGQA…FGRLDANAMV (323 aa)). Residues D202 and H242 each act as charge relay system in the active site. 2 disulfide bridges follow: C259–C411 and C351–C381. S419 acts as the Charge relay system in catalysis. The 144-residue stretch at 495–638 (LPAQRKCTAA…EERVIDTQTK (144 aa)) folds into the P/Homo B domain. C501 and C527 form a disulfide bridge. Residues 668 to 710 (TIEGSTQDHVKPKEGAKEPWGNYRNTNNINNNSSTAFKRKKKQ) are disordered. Positions 673 to 684 (TQDHVKPKEGAK) are enriched in basic and acidic residues. The segment covering 689 to 699 (NYRNTNNINNN) has biased composition (low complexity). Residues N698 and N699 are each glycosylated (N-linked (GlcNAc...) asparagine).

This sequence belongs to the peptidase S8 family. Furin subfamily. In terms of tissue distribution, predominantly in the body column.

In terms of biological role, probably involved in the processing of hormone and other protein precursors at sites comprised of pairs of basic amino acid residues. This chain is PC3-like endoprotease variant B, found in Hydra vulgaris (Hydra).